The sequence spans 864 residues: MHERYVPADVEAAAQSDWRAADAYRSKEDANRKKFYCVSMLPYPSGKLHMGHVRNYTINDVMYRYLRMNGYNTLMPMGWDAFGMPAENAAMANGVPPAQWTYENIAYMKKQMQAMGLAIDWSREVTTCKPDYYKWNQWLFLKMLEKGIAYKKTGTVNWDPVDQTVLANEQVIDGRGWRSGAFVEKREIPMYYMRITQYADELLNDLDGLGWPERVKVMQHNWIGKSFGVNFGFPYELDGEKKLLRVFTTRADTIMGVTFCAIAAEHPLAARLARDKPALQAFIDECKRGGVAEADIATMEKKGVATGFSVSHPLTGEPVEVWIGNYVLMSYGEGAVMGVPAHDERDFAFAKKYGLPIRQVIAVEGETYSTDAWQEWYGDKTRAVCVNSGKYDGLAYDAAVDAIAAELKAGGLGDKQITYRLRDWGISRQRYWGTPIPIIHCPSCGDVPVPEQDLPVVLPEDLVPDGTGNPLAKSDAFLNCTCPKCGAVAKRETDTMDTFVDSAWYFSRYAAPDAQTMVDARTDYWMPMDQYIGGIEHAILHLLYSRFWAKVMRDLGLVAFGEPAKNLLTQGMVLNETFYREDAAGKKTWYNPADVTVSFDDKGRPVGAVLKSDGQPVELGGIEKMSKSKNNGVDPQMLIDHYGADTARLFTMFAAPPEQQLEWSGAGVDGASRFLRRVWAFGFANREALAVRAPFDAAQLAEAGKTLRREIHGVLKQADFDYQRLQYNTVVSAAMKMLNAIEGAKGATPAVLRETYGVLLRVLYPVVPHVTFELWKVLGYADEFGPLLDAPWPKVDEAALEQAEIELVLQVNGKVRGALKVAKDASREAIEAAAVADGMFAKFAEGRPAKKIIVVPGRLVNVVV.

Positions 42–52 match the 'HIGH' region motif; it reads PYPSGKLHMGH. The short motif at 624-628 is the 'KMSKS' region element; it reads KMSKS. Lys-627 provides a ligand contact to ATP.

The protein belongs to the class-I aminoacyl-tRNA synthetase family.

The protein resides in the cytoplasm. It carries out the reaction tRNA(Leu) + L-leucine + ATP = L-leucyl-tRNA(Leu) + AMP + diphosphate. The sequence is that of Leucine--tRNA ligase from Burkholderia mallei (strain NCTC 10229).